We begin with the raw amino-acid sequence, 264 residues long: [LysW]-aminoadipate/[LysW]-glutamate kinase (264 aa).

Substrate is bound by residues G35–G36, R62, and N167.

This sequence belongs to the acetylglutamate kinase family. LysZ subfamily.

Its subcellular location is the cytoplasm. It catalyses the reaction [amino-group carrier protein]-C-terminal-N-(1,4-dicarboxybutan-1-yl)-L-glutamine + ATP = [amino-group carrier protein]-C-terminal-N-(1-carboxy-5-phosphooxy-5-oxopentan-1-yl)-L-glutamine + ADP. The catalysed reaction is [amino-group carrier protein]-C-terminal-gamma-(L-glutamyl)-L-glutamate + ATP = [amino-group carrier protein]-C-terminal-gamma-(5-phospho-L-glutamyl)-L-glutamate + ADP. It functions in the pathway amino-acid biosynthesis; L-lysine biosynthesis via AAA pathway; L-lysine from L-alpha-aminoadipate (Thermus route): step 2/5. It participates in amino-acid biosynthesis; L-arginine biosynthesis. Functionally, involved in both the arginine and lysine biosynthetic pathways. Phosphorylates the LysW-bound precursors glutamate (for arginine biosynthesis), respectively alpha-aminoadipate (for lysine biosynthesis). This is [LysW]-aminoadipate/[LysW]-glutamate kinase from Saccharolobus islandicus (strain Y.N.15.51 / Yellowstone #2) (Sulfolobus islandicus).